A 1770-amino-acid polypeptide reads, in one-letter code: Transposon Ty2-LR1 Gag-Pol polyprotein (1770 aa).

Composition is skewed to polar residues over residues 1–11 (MESQQLHQNPH), 19–39 (ASVTSKEVPSNQDPLAVSASN), and 49–60 (KVNSQQETTPGT). Disordered stretches follow at residues 1–86 (MESQ…GQYQ) and 359–453 (QHSE…LPDH). The segment at 295–397 (ENNINVSDRL…SSKPRAAKAH (103 aa)) is RNA-binding. A compositionally biased stretch (low complexity) spans 369–381 (TSPNTTNTKVTTR). Composition is skewed to polar residues over residues 399–408 (IATSSKFSRV) and 415–435 (ESTVSSQYLSDDNELSLGQQQ). The active-site For protease activity; shared with dimeric partner is Asp-457. Residues 579 to 636 (NVNKSKSVNKYPYPLIHRMLGHANFRSIQKSLKKNAVTYLKESDIEWSNASTYQCPDC) form an integrase-type zinc finger-like region. Positions 656-831 (ESYEPFQYLH…AGLDITTILP (176 aa)) constitute an Integrase catalytic domain. Asp-667 and Asp-732 together coordinate Mg(2+). Disordered stretches follow at residues 1005 to 1038 (GGTIESDTTSPRHSSTFTARNQKRPGSPNDMIDL), 1058 to 1135 (GTEE…KSSK), 1146 to 1165 (LPLPDLTHKSPTDTSDVSKD), and 1170 to 1205 (HSRQTNSSLGGMDDSNVLTTTKSKKRSLEDNETEIE). Composition is skewed to polar residues over residues 1009-1024 (ESDTTSPRHSSTFTAR) and 1065-1082 (QRNSDTNIKYRTTNSTPS). Residues 1151–1165 (LTHKSPTDTSDVSKD) are compositionally biased toward basic and acidic residues. The Bipartite nuclear localization signal motif lies at 1193 to 1227 (KKRSLEDNETEIEVSRDTWNNKNMRSLEPPRSKKR). The region spanning 1353-1491 (NDYYITQLDI…DILGLEIKYQ (139 aa)) is the Reverse transcriptase Ty1/copia-type domain. Residues Asp-1361, Asp-1442, Asp-1443, Asp-1625, Glu-1667, and Asp-1700 each contribute to the Mg(2+) site. Residues 1625 to 1767 (DASYGNQPYY…IKTFKLLTNK (143 aa)) form the RNase H Ty1/copia-type domain.

As to quaternary structure, the capsid protein forms a homotrimer, from which the VLPs are assembled. The protease is a homodimer, whose active site consists of two apposed aspartic acid residues. Post-translationally, initially, virus-like particles (VLPs) are composed of the structural unprocessed proteins Gag and Gag-Pol, and also contain the host initiator methionine tRNA (tRNA(i)-Met) which serves as a primer for minus-strand DNA synthesis, and a dimer of genomic Ty RNA. Processing of the polyproteins occurs within the particle and proceeds by an ordered pathway, called maturation. First, the protease (PR) is released by autocatalytic cleavage of the Gag-Pol polyprotein, and this cleavage is a prerequisite for subsequent processing at the remaining sites to release the mature structural and catalytic proteins. Maturation takes place prior to the RT reaction and is required to produce transposition-competent VLPs.

It is found in the cytoplasm. The protein resides in the nucleus. The catalysed reaction is DNA(n) + a 2'-deoxyribonucleoside 5'-triphosphate = DNA(n+1) + diphosphate. It catalyses the reaction Endonucleolytic cleavage to 5'-phosphomonoester.. Its function is as follows. Capsid protein (CA) is the structural component of the virus-like particle (VLP), forming the shell that encapsulates the retrotransposons dimeric RNA genome. The particles are assembled from trimer-clustered units and there are holes in the capsid shells that allow for the diffusion of macromolecules. CA also has nucleocapsid-like chaperone activity, promoting primer tRNA(i)-Met annealing to the multipartite primer-binding site (PBS), dimerization of Ty2 RNA and initiation of reverse transcription. Functionally, the aspartyl protease (PR) mediates the proteolytic cleavages of the Gag and Gag-Pol polyproteins after assembly of the VLP. In terms of biological role, reverse transcriptase/ribonuclease H (RT) is a multifunctional enzyme that catalyzes the conversion of the retro-elements RNA genome into dsDNA within the VLP. The enzyme displays a DNA polymerase activity that can copy either DNA or RNA templates, and a ribonuclease H (RNase H) activity that cleaves the RNA strand of RNA-DNA heteroduplexes during plus-strand synthesis and hydrolyzes RNA primers. The conversion leads to a linear dsDNA copy of the retrotransposon that includes long terminal repeats (LTRs) at both ends. Integrase (IN) targets the VLP to the nucleus, where a subparticle preintegration complex (PIC) containing at least integrase and the newly synthesized dsDNA copy of the retrotransposon must transit the nuclear membrane. Once in the nucleus, integrase performs the integration of the dsDNA into the host genome. The sequence is that of Transposon Ty2-LR1 Gag-Pol polyprotein (TY2B-LR1) from Saccharomyces cerevisiae (strain ATCC 204508 / S288c) (Baker's yeast).